A 230-amino-acid polypeptide reads, in one-letter code: Ribosomal RNA small subunit methyltransferase G (230 aa).

S-adenosyl-L-methionine-binding positions include Gly91, Leu96, 142 to 143 (VE), and Arg161.

This sequence belongs to the methyltransferase superfamily. RNA methyltransferase RsmG family.

Its subcellular location is the cytoplasm. The catalysed reaction is guanosine(527) in 16S rRNA + S-adenosyl-L-methionine = N(7)-methylguanosine(527) in 16S rRNA + S-adenosyl-L-homocysteine. Its function is as follows. Specifically methylates the N7 position of guanine in position 527 of 16S rRNA. The polypeptide is Ribosomal RNA small subunit methyltransferase G (Burkholderia pseudomallei (strain K96243)).